A 265-amino-acid chain; its full sequence is Hydroxyethylthiazole kinase (265 aa).

M50 serves as a coordination point for substrate. Residues R125 and T171 each contribute to the ATP site. G198 contributes to the substrate binding site.

The protein belongs to the Thz kinase family. The cofactor is Mg(2+).

It catalyses the reaction 5-(2-hydroxyethyl)-4-methylthiazole + ATP = 4-methyl-5-(2-phosphooxyethyl)-thiazole + ADP + H(+). Its pathway is cofactor biosynthesis; thiamine diphosphate biosynthesis; 4-methyl-5-(2-phosphoethyl)-thiazole from 5-(2-hydroxyethyl)-4-methylthiazole: step 1/1. Functionally, catalyzes the phosphorylation of the hydroxyl group of 4-methyl-5-beta-hydroxyethylthiazole (THZ). This is Hydroxyethylthiazole kinase from Salmonella agona (strain SL483).